The sequence spans 255 residues: Syntaxin-6 (255 aa).

Ser-2 carries the post-translational modification N-acetylserine. Phosphoserine is present on Ser-2. Residues 2–168 (SMEDPFFVVK…QAQQQLIVEQ (167 aa)) form a required for interaction with VPS51 region. Residues 2–234 (SMEDPFFVVK…VSHMTSDRRQ (233 aa)) lie on the Cytoplasmic side of the membrane. Positions 41 to 74 (EEIDWTTNELRNNLRSIEWDLEDLDETISIVEAN) form a coiled coil. Residues Ser-129 and Ser-152 each carry the phosphoserine modification. The region spanning 163-225 (QLIVEQQDEQ…DNVMKKLAKV (63 aa)) is the t-SNARE coiled-coil homology domain. The chain crosses the membrane as a helical; Anchor for type IV membrane protein span at residues 235–255 (WCAIAILFAVLVVVLILFLVL).

The protein belongs to the syntaxin family. As to quaternary structure, identified in a complex containing STX6, STX12 and VAMP4. This complex also includes VTI1A. Binds EEA1. Interacts with VPS45A and GOPC. Interacts with MARCHF2; the interaction promotes MARCHF2-mediated ubiquitination and degradation of CFTR. Interacts with MARCHF3. Interacts with BLTP3B (via C-terminal coiled-coil domain). Interacts with BAIAP3; this interaction is increased in the presence of calcium. Interacts with VPS13B.

It localises to the golgi apparatus membrane. It is found in the golgi apparatus. The protein resides in the trans-Golgi network membrane. The protein localises to the recycling endosome membrane. Functionally, SNARE promoting movement of transport vesicles to target membranes. Targets endosomes to the trans-Golgi network, and may therefore function in retrograde trafficking. Together with SNARE STX12, promotes movement of vesicles from endosomes to the cell membrane, and may therefore function in the endocytic recycling pathway. The chain is Syntaxin-6 (Stx6) from Mus musculus (Mouse).